The chain runs to 854 residues: Lysine-specific demethylase 3 (854 aa).

A disordered region spans residues 64–88 (QRVQQEEESLGQVPPLTEEEQQRHD). The JmjC domain maps to 601–806 (LRTGNLNIAS…HCYHLTHEFR (206 aa)). Fe cation contacts are provided by histidine 643, aspartate 645, and histidine 774.

Belongs to the JHDM2-like histone demethylase family. Fe(2+) serves as cofactor. Expressed in neurons close to the dorsal lateral neurons involved in circadian rhythm.

The protein resides in the nucleus. Its subcellular location is the cytoplasm. It carries out the reaction N(6),N(6)-dimethyl-L-lysyl(9)-[histone H3] + 2 2-oxoglutarate + 2 O2 = L-lysyl(9)-[histone H3] + 2 formaldehyde + 2 succinate + 2 CO2. Histone demethylase that specifically demethylates 'Lys-10' of histone H3 (H3K9), thereby playing a central role in histone code. Demethylation of Lys residue generates formaldehyde and succinate. Probably involved in regulation of chromatin structure, promoting expansion of euchromatin. Negatively regulates rhino-dependent piRNA production capacity of several genomic regions; may help define the frontiers of piRNA clusters by regulating histone methylation levels. May be involved in regulation of behavior and circadian rhythms. This is Lysine-specific demethylase 3 from Drosophila melanogaster (Fruit fly).